The chain runs to 354 residues: Glutamine synthetase (354 aa).

The region spanning 22–101 (FHAEYVWIDG…VLSETYNNDG (80 aa)) is the GS beta-grasp domain. The 247-residue stretch at 108 to 354 (HRHHTAKVME…IIIETTILDK (247 aa)) folds into the GS catalytic domain.

Belongs to the glutamine synthetase family. As to quaternary structure, homooctamer.

The protein resides in the cytoplasm. It catalyses the reaction L-glutamate + NH4(+) + ATP = L-glutamine + ADP + phosphate + H(+). This chain is Glutamine synthetase (GLN1), found in Amanita muscaria (Fly agaric).